The sequence spans 166 residues: ATP synthase subunit b (166 aa).

Residues 15 to 37 form a helical membrane-spanning segment; it reads TLYYLLIFAALLLLVKHFAWGPV.

It belongs to the ATPase B chain family. In terms of assembly, F-type ATPases have 2 components, F(1) - the catalytic core - and F(0) - the membrane proton channel. F(1) has five subunits: alpha(3), beta(3), gamma(1), delta(1), epsilon(1). F(0) has three main subunits: a(1), b(2) and c(10-14). The alpha and beta chains form an alternating ring which encloses part of the gamma chain. F(1) is attached to F(0) by a central stalk formed by the gamma and epsilon chains, while a peripheral stalk is formed by the delta and b chains.

It is found in the cell membrane. Functionally, f(1)F(0) ATP synthase produces ATP from ADP in the presence of a proton or sodium gradient. F-type ATPases consist of two structural domains, F(1) containing the extramembraneous catalytic core and F(0) containing the membrane proton channel, linked together by a central stalk and a peripheral stalk. During catalysis, ATP synthesis in the catalytic domain of F(1) is coupled via a rotary mechanism of the central stalk subunits to proton translocation. In terms of biological role, component of the F(0) channel, it forms part of the peripheral stalk, linking F(1) to F(0). This Lactobacillus johnsonii (strain CNCM I-12250 / La1 / NCC 533) protein is ATP synthase subunit b.